Here is an 888-residue protein sequence, read N- to C-terminus: Phosphoenolpyruvate carboxylase (888 aa).

Catalysis depends on residues His144 and Lys553.

The protein belongs to the PEPCase type 1 family. Requires Mg(2+) as cofactor.

It catalyses the reaction oxaloacetate + phosphate = phosphoenolpyruvate + hydrogencarbonate. Its function is as follows. Forms oxaloacetate, a four-carbon dicarboxylic acid source for the tricarboxylic acid cycle. This Alcanivorax borkumensis (strain ATCC 700651 / DSM 11573 / NCIMB 13689 / SK2) protein is Phosphoenolpyruvate carboxylase.